A 297-amino-acid chain; its full sequence is Pyridoxal 5'-phosphate synthase subunit PdxS (297 aa).

Residue D27 coordinates D-ribose 5-phosphate. K84 (schiff-base intermediate with D-ribose 5-phosphate) is an active-site residue. G156 provides a ligand contact to D-ribose 5-phosphate. R168 is a binding site for D-glyceraldehyde 3-phosphate. Residues G217 and 238 to 239 contribute to the D-ribose 5-phosphate site; that span reads GS.

It belongs to the PdxS/SNZ family. In terms of assembly, in the presence of PdxT, forms a dodecamer of heterodimers.

The enzyme catalyses aldehydo-D-ribose 5-phosphate + D-glyceraldehyde 3-phosphate + L-glutamine = pyridoxal 5'-phosphate + L-glutamate + phosphate + 3 H2O + H(+). Its pathway is cofactor biosynthesis; pyridoxal 5'-phosphate biosynthesis. Catalyzes the formation of pyridoxal 5'-phosphate from ribose 5-phosphate (RBP), glyceraldehyde 3-phosphate (G3P) and ammonia. The ammonia is provided by the PdxT subunit. Can also use ribulose 5-phosphate and dihydroxyacetone phosphate as substrates, resulting from enzyme-catalyzed isomerization of RBP and G3P, respectively. This chain is Pyridoxal 5'-phosphate synthase subunit PdxS, found in Corynebacterium diphtheriae (strain ATCC 700971 / NCTC 13129 / Biotype gravis).